Consider the following 245-residue polypeptide: Probable 2-phosphosulfolactate phosphatase (245 aa).

It belongs to the ComB family. Requires Mg(2+) as cofactor.

It catalyses the reaction (2R)-O-phospho-3-sulfolactate + H2O = (2R)-3-sulfolactate + phosphate. This is Probable 2-phosphosulfolactate phosphatase from Trichormus variabilis (strain ATCC 29413 / PCC 7937) (Anabaena variabilis).